A 154-amino-acid polypeptide reads, in one-letter code: Protein X (154 aa).

Positions 28-50 are disordered; that stretch reads RPLPGPLGAVPPSSPSAVPADDG. Over residues 33-48 the composition is skewed to low complexity; the sequence is PLGAVPPSSPSAVPAD. The segment at 68-117 is mitochondrial targeting sequence; that stretch reads PCALRFTSARRMETTVNAPWSLPTVLHKRTLGLSGWSMTWIEEYIKDCVF.

This sequence belongs to the orthohepadnavirus protein X family. As to quaternary structure, may form homodimer. May interact with host CEBPA, CFLAR, CREB1, DDB1, E4F1, HBXIP, HSPD1/HSP60, NFKBIA, POLR2E and SMAD4. Interacts with host SMC5-SMC6 complex and induces its degradation. Interacts with host TRPC4AP; leading to prevent ubiquitination of TRPC4AP. Interacts with host PLSCR1; this interaction promotes ubiquitination and degradation of HBx and impairs HBx-mediated cell proliferation. Post-translationally, a fraction may be phosphorylated in insect cells and HepG2 cells, a human hepatoblastoma cell line. Phosphorylated in vitro by host protein kinase C or mitogen-activated protein kinase. N-acetylated in insect cells.

The protein resides in the host cytoplasm. It localises to the host nucleus. It is found in the host mitochondrion. Multifunctional protein that plays a role in silencing host antiviral defenses and promoting viral transcription. Does not seem to be essential for HBV infection. May be directly involved in development of cirrhosis and liver cancer (hepatocellular carcinoma). Most of cytosolic activities involve modulation of cytosolic calcium. The effect on apoptosis is controversial depending on the cell types in which the studies have been conducted. May induce apoptosis by localizing in mitochondria and causing loss of mitochondrial membrane potential. May also modulate apoptosis by binding host CFLAR, a key regulator of the death-inducing signaling complex (DISC). Promotes viral transcription by using the host E3 ubiquitin ligase DDB1 to target the SMC5-SMC6 complex to proteasomal degradation. This host complex would otherwise bind to viral episomal DNA, and prevents its transcription. Moderately stimulates transcription of many different viral and cellular transcription elements. Promoters and enhancers stimulated by HBx contain DNA binding sites for NF-kappa-B, AP-1, AP-2, c-EBP, ATF/CREB, or the calcium-activated factor NF-AT. The sequence is that of Protein X from Homo sapiens (Human).